The sequence spans 583 residues: Torsin-1A-interacting protein 1 (583 aa).

Residues 1 to 12 are compositionally biased toward basic and acidic residues; it reads MAGDGRRAEAVR. Disordered regions lie at residues 1–254 and 271–293; these read MAGD…RSSS and AHDKQPSVLSSGYQKTPQEWAPQ. Residues 1-338 lie on the Nuclear side of the membrane; that stretch reads MAGDGRRAEA…NASFVKRNRW (338 aa). The residue at position 60 (serine 60) is a Phosphoserine. Composition is skewed to basic and acidic residues over residues 74-101 and 115-124; these read VAKERSPVGKRTRLEEFRSDSAKEEVRE and RPQETEEMKT. Serine 135 and serine 143 each carry phosphoserine. A Methionine sulfoxide modification is found at methionine 146. Serine 154, serine 156, and serine 157 each carry phosphoserine. Positions 165-174 are enriched in polar residues; it reads QTDLSQTISK. Phosphoserine is present on residues serine 186 and serine 215. Acidic residues predominate over residues 216-225; it reads EEGETEEDDQ. Position 220 is a phosphothreonine (threonine 220). Phosphoserine occurs at positions 227, 230, and 242. The segment covering 238 to 250 has biased composition (basic and acidic residues); sequence RSRDSDESGDKTT. Residues 277-287 show a composition bias toward polar residues; it reads SVLSSGYQKTP. Methionine 301 is subject to Methionine sulfoxide. Residue serine 305 is modified to Phosphoserine. Lysine 308 participates in a covalent cross-link: Glycyl lysine isopeptide (Lys-Gly) (interchain with G-Cter in SUMO2). A phosphoserine mark is found at serine 309 and serine 315. The segment at 309-328 is disordered; it reads SELGNQSPSTSSRQVTGQPQ. A helical membrane pass occupies residues 339 to 355; that stretch reads WLLPLIAALASGSFWFF. Residues 356 to 583 are Perinuclear space-facing; that stretch reads STPEVETTAV…ENALKRGICL (228 aa). The interaction with TOR1A stretch occupies residues 356 to 583; it reads STPEVETTAV…ENALKRGICL (228 aa). The stretch at 359–435 forms a coiled coil; it reads EVETTAVQEF…SEQIADAYSS (77 aa). An N-linked (GlcNAc...) asparagine glycan is attached at asparagine 399. Position 552 is a methionine sulfoxide (methionine 552).

This sequence belongs to the TOR1AIP family. Interacts with ATP1B4. Interacts with TOR1A (ATP-bound). Interacts with TOR1B, TOR2A and TOR3A. Interacts with VIM. In terms of processing, phosphorylated. Dephosphorylated at Ser-309 and Ser-315 by serine/threonine-protein phosphatase PP1. In terms of tissue distribution, expressed in muscle, liver and kidney. Major isoform present in liver, brain and heart (at protein level). Expressed at lower levels than isoform 4 in lung, kidney and spleen (at protein level). Similar levels of isoforms 1 and 4 are observed in ovary, testis and pancreas (at protein level). As to expression, expressed at higher levels than isoform 1 in lung, kidney and spleen (at protein level). Expressed at lower levels than isoform 1 in liver, brain and heart (at protein level). Similar levels of isoforms 1 and 4 are observed in ovary, testis and pancreas (at protein level).

It localises to the nucleus inner membrane. It is found in the nucleus envelope. Its subcellular location is the nucleus. In terms of biological role, required for nuclear membrane integrity. Induces TOR1A and TOR1B ATPase activity and is required for their location on the nuclear membrane. Binds to A- and B-type lamins. Possible role in membrane attachment and assembly of the nuclear lamina. This Homo sapiens (Human) protein is Torsin-1A-interacting protein 1 (TOR1AIP1).